The following is a 375-amino-acid chain: Chaperone protein DnaJ (375 aa).

The J domain occupies 5–70; sequence DFYETLGVAK…QKRAAYDRYG (66 aa). The CR-type zinc finger occupies 136–214; that stretch reads GKTAQIRVPT…CHGQGRVTEE (79 aa). Zn(2+) is bound by residues C149, C152, C166, C169, C188, C191, C202, and C205. CXXCXGXG motif repeat units lie at residues 149 to 156, 166 to 173, 188 to 195, and 202 to 209; these read CDVCSGSG, CGTCQGTG, CPTCHGRG, and CPKCHGQG.

Belongs to the DnaJ family. As to quaternary structure, homodimer. It depends on Zn(2+) as a cofactor.

The protein localises to the cytoplasm. In terms of biological role, participates actively in the response to hyperosmotic and heat shock by preventing the aggregation of stress-denatured proteins and by disaggregating proteins, also in an autonomous, DnaK-independent fashion. Unfolded proteins bind initially to DnaJ; upon interaction with the DnaJ-bound protein, DnaK hydrolyzes its bound ATP, resulting in the formation of a stable complex. GrpE releases ADP from DnaK; ATP binding to DnaK triggers the release of the substrate protein, thus completing the reaction cycle. Several rounds of ATP-dependent interactions between DnaJ, DnaK and GrpE are required for fully efficient folding. Also involved, together with DnaK and GrpE, in the DNA replication of plasmids through activation of initiation proteins. The sequence is that of Chaperone protein DnaJ from Rhizobium etli (strain ATCC 51251 / DSM 11541 / JCM 21823 / NBRC 15573 / CFN 42).